The primary structure comprises 100 residues: Aspartyl/glutamyl-tRNA(Asn/Gln) amidotransferase subunit C (100 aa).

Belongs to the GatC family. As to quaternary structure, heterotrimer of A, B and C subunits.

The catalysed reaction is L-glutamyl-tRNA(Gln) + L-glutamine + ATP + H2O = L-glutaminyl-tRNA(Gln) + L-glutamate + ADP + phosphate + H(+). It catalyses the reaction L-aspartyl-tRNA(Asn) + L-glutamine + ATP + H2O = L-asparaginyl-tRNA(Asn) + L-glutamate + ADP + phosphate + 2 H(+). Allows the formation of correctly charged Asn-tRNA(Asn) or Gln-tRNA(Gln) through the transamidation of misacylated Asp-tRNA(Asn) or Glu-tRNA(Gln) in organisms which lack either or both of asparaginyl-tRNA or glutaminyl-tRNA synthetases. The reaction takes place in the presence of glutamine and ATP through an activated phospho-Asp-tRNA(Asn) or phospho-Glu-tRNA(Gln). The chain is Aspartyl/glutamyl-tRNA(Asn/Gln) amidotransferase subunit C from Streptococcus gordonii (strain Challis / ATCC 35105 / BCRC 15272 / CH1 / DL1 / V288).